Here is a 445-residue protein sequence, read N- to C-terminus: Homogentisate 1,2-dioxygenase (445 aa).

Lys-98 carries the post-translational modification N6-acetyllysine. Fe cation contacts are provided by His-335, Glu-341, and His-371. Lys-414 carries the N6-succinyllysine modification.

The protein belongs to the homogentisate dioxygenase family. In terms of assembly, homohexamer arranged as a dimer of trimers. Fe cation serves as cofactor. In terms of tissue distribution, highest expression in the prostate, small intestine, colon, kidney and liver.

The catalysed reaction is homogentisate + O2 = 4-maleylacetoacetate + H(+). Its pathway is amino-acid degradation; L-phenylalanine degradation; acetoacetate and fumarate from L-phenylalanine: step 4/6. Functionally, catalyzes the conversion of homogentisate to maleylacetoacetate. This is Homogentisate 1,2-dioxygenase (HGD) from Homo sapiens (Human).